A 213-amino-acid chain; its full sequence is N-(5'-phosphoribosyl)anthranilate isomerase (213 aa).

This sequence belongs to the TrpF family.

It carries out the reaction N-(5-phospho-beta-D-ribosyl)anthranilate = 1-(2-carboxyphenylamino)-1-deoxy-D-ribulose 5-phosphate. It functions in the pathway amino-acid biosynthesis; L-tryptophan biosynthesis; L-tryptophan from chorismate: step 3/5. This Caulobacter sp. (strain K31) protein is N-(5'-phosphoribosyl)anthranilate isomerase.